Reading from the N-terminus, the 444-residue chain is C4-dicarboxylate transport protein 1 (444 aa).

9 helical membrane passes run 9–29 (SIFLQVVIGLVIGVLCGVGIP), 42–62 (FIKLIKMLIALIVFCVVVNGI), 78–98 (SVIYFEILTTIALVLGLVVAY), 152–172 (ILQVLLFSVLFGSALNLVGEQ), 190–210 (IMGMIVRLAPLGVFGAVAFTT), 221–241 (LGALVLVFYATCLVFVMAVLG), 307–327 (FSIYLTLAVVFIAHVTGTPLA), 354–374 (VILAATLTAVPAIPVAGLVLV), and 380–400 (FMGIGRALTNLIGNCVATVTI).

Belongs to the dicarboxylate/amino acid:cation symporter (DAACS) (TC 2.A.23) family.

It localises to the cell inner membrane. Its function is as follows. Responsible for the transport of dicarboxylates such as succinate, fumarate, and malate from the periplasm across the membrane. The protein is C4-dicarboxylate transport protein 1 of Pseudomonas paraeruginosa (strain DSM 24068 / PA7) (Pseudomonas aeruginosa (strain PA7)).